The sequence spans 176 residues: Flavodoxin-like domain-containing protein BilS (176 aa).

The protein operates within porphyrin-containing compound metabolism; protoheme degradation. Functionally, together with BilR, catalyzes reduction of mesobilirubin and/or bilirubin to urobilinogen, a key step during heme degradation. BilS is probably involved in electron transfer for the bilirubin reductase BilR. The sequence is that of Flavodoxin-like domain-containing protein BilS from Clostridioides difficile (strain CD3).